A 69-amino-acid polypeptide reads, in one-letter code: Large ribosomal subunit protein bL31 (69 aa).

Zn(2+) contacts are provided by Cys17, Cys19, Cys37, and Cys40.

It belongs to the bacterial ribosomal protein bL31 family. Type A subfamily. Part of the 50S ribosomal subunit. Zn(2+) is required as a cofactor.

Its function is as follows. Binds the 23S rRNA. The chain is Large ribosomal subunit protein bL31 from Caldanaerobacter subterraneus subsp. tengcongensis (strain DSM 15242 / JCM 11007 / NBRC 100824 / MB4) (Thermoanaerobacter tengcongensis).